The chain runs to 259 residues: uncharacterized protein (259 aa).

Residues 158-187 adopt a coiled-coil conformation; that stretch reads VELHLKIIEEDMKETTKKNKEKKQNSQSQE. Residues 172–181 are compositionally biased toward basic and acidic residues; sequence TTKKNKEKKQ. 2 disordered regions span residues 172-197 and 217-240; these read TTKK…MEVS and PVKK…QLSK. Composition is skewed to low complexity over residues 182 to 193 and 217 to 226; these read NSQSQEISNSIE and PVKKTSSASK.

This is an uncharacterized protein from Acanthamoeba polyphaga mimivirus (APMV).